We begin with the raw amino-acid sequence, 469 residues long: 3-isopropylmalate dehydratase large subunit (469 aa).

[4Fe-4S] cluster contacts are provided by Cys349, Cys410, and Cys413.

Belongs to the aconitase/IPM isomerase family. LeuC type 1 subfamily. Heterodimer of LeuC and LeuD. The cofactor is [4Fe-4S] cluster.

It carries out the reaction (2R,3S)-3-isopropylmalate = (2S)-2-isopropylmalate. The protein operates within amino-acid biosynthesis; L-leucine biosynthesis; L-leucine from 3-methyl-2-oxobutanoate: step 2/4. Catalyzes the isomerization between 2-isopropylmalate and 3-isopropylmalate, via the formation of 2-isopropylmaleate. The protein is 3-isopropylmalate dehydratase large subunit of Neisseria meningitidis serogroup C / serotype 2a (strain ATCC 700532 / DSM 15464 / FAM18).